The following is a 336-amino-acid chain: Dihydroorotate dehydrogenase (quinone) (336 aa).

Residues 62-66 (AGLDK) and T86 contribute to the FMN site. K66 serves as a coordination point for substrate. 111 to 115 (NRFGF) provides a ligand contact to substrate. The FMN site is built by N139 and N172. N172 is a binding site for substrate. S175 (nucleophile) is an active-site residue. N177 contacts substrate. Residues K217 and T245 each coordinate FMN. 246–247 (NT) lines the substrate pocket. FMN is bound by residues G268, G297, and 318–319 (YS).

It belongs to the dihydroorotate dehydrogenase family. Type 2 subfamily. In terms of assembly, monomer. Requires FMN as cofactor.

It is found in the cell membrane. It carries out the reaction (S)-dihydroorotate + a quinone = orotate + a quinol. It functions in the pathway pyrimidine metabolism; UMP biosynthesis via de novo pathway; orotate from (S)-dihydroorotate (quinone route): step 1/1. Functionally, catalyzes the conversion of dihydroorotate to orotate with quinone as electron acceptor. The chain is Dihydroorotate dehydrogenase (quinone) from Photobacterium profundum (strain SS9).